Here is a 177-residue protein sequence, read N- to C-terminus: MASSMMASTAAVARVGPAQTNMVAPFNGLRSSVAFPATRKANNDLSTLPSNGGRVSCMQVWPPEGLKKFETLSYLPPLSVEDLAKEVDYLLRNDWVPCIEFSKEGFVYRENHASPGYYDGRYWTMWKLPMFGCTDASQVIAEVEEAKKAYPEYFVRIIGFDNKRQVQCISFIAYKPT.

Residues 1-56 (MASSMMASTAAVARVGPAQTNMVAPFNGLRSSVAFPATRKANNDLSTLPSNGGRVS) constitute a chloroplast transit peptide.

This sequence belongs to the RuBisCO small chain family. In terms of assembly, heterohexadecamer of 8 large and 8 small subunits.

The protein localises to the plastid. The protein resides in the chloroplast. Its function is as follows. RuBisCO catalyzes two reactions: the carboxylation of D-ribulose 1,5-bisphosphate, the primary event in carbon dioxide fixation, as well as the oxidative fragmentation of the pentose substrate. Both reactions occur simultaneously and in competition at the same active site. Although the small subunit is not catalytic it is essential for maximal activity. The polypeptide is Ribulose bisphosphate carboxylase small subunit, chloroplastic 6 (Lemna gibba (Swollen duckweed)).